The chain runs to 220 residues: Ribosome maturation factor RimP (220 aa).

The tract at residues 173–220 (KKDKEERRQRKKARRRGEKGGVGDDGTAGEEQPDSAREGPARSASEGE) is disordered.

This sequence belongs to the RimP family.

The protein localises to the cytoplasm. Functionally, required for maturation of 30S ribosomal subunits. The sequence is that of Ribosome maturation factor RimP from Chelativorans sp. (strain BNC1).